The chain runs to 68 residues: Purkinje cell protein 4-like protein 1 (68 aa).

The span at 1 to 16 (MSELNTKTPPAANQAS) shows a compositional bias: polar residues. The disordered stretch occupies residues 1 to 42 (MSELNTKTPPAANQASDPEEKGKPGSIKKAEEEEEIDIDLTA). Thr8 carries the post-translational modification Phosphothreonine. Positions 18 to 31 (PEEKGKPGSIKKAE) are enriched in basic and acidic residues. The region spanning 45-68 (TEKAALAIQGKFRRFQKRKKDSSS) is the IQ domain.

Belongs to the PCP4 family. In terms of tissue distribution, expressed in laminar and nuclear structures of the CNS.

In Mus musculus (Mouse), this protein is Purkinje cell protein 4-like protein 1 (Pcp4l1).